The primary structure comprises 735 residues: Protostadienol synthase helA (735 aa).

The stretch at Lys-132–Gly-173 is one PFTB 1 repeat. Asp-463 functions as the Proton donor in the catalytic mechanism. 3 PFTB repeats span residues Leu-490–Val-531, Leu-567–Gly-607, and Cys-616–Gly-663.

It belongs to the terpene cyclase/mutase family.

It catalyses the reaction (S)-2,3-epoxysqualene = (17Z)-protosta-17(20),24-dien-3beta-ol. It functions in the pathway mycotoxin biosynthesis. Its function is as follows. Protostadienol synthase; part of the gene cluster that mediates the biosynthesis of helvolic acid, an antibacterial nortriterpenoid. Protostadienol synthase helA cyclizes (3S)-oxidosqualene to (17Z)-protosta-17(20),24-dien-3-beta-ol (protostadienol). The synthesis of protostadienol is followed by several steps of monooxygenation, dehydrogenation, and acyl transfer to yield the final helvolic acid. Following the cyclization to the tetracyclic protostadienol by helA, cytochrome P450 monooxygenases helB1-mediated and helB2-mediated oxidation at C-4 and C-16, acyltransferase helD2-dependent acetylation of 16-OH, oxidation of C-21 by cytochrome P450 monooxygenase helB4, and short chain dehydrogenase helC-dependent oxidative decarboxylation yield the fusidane skeleton. This intermediate is further modified in three additional steps mediated by the cytochrome P450 monooxygenase helB3, the acyltransferase helD1, and the 3-ketosteroid 1-dehydrogenase helE to give helvolic acid. Compared with the late stages in the biosynthesis of helvolic acid, enzymes involved in the early stage modifications act in a relatively strict order. The hydroxylation of C-16 by helB1 and subsequent acetylation by helD2 should occur before the helB3-mediated oxidation of C-21. C-4 demethylation in fusidane-type antibiotics proceeds in an unusual manner though it is also achieved by oxidative decarboxylation. The methyl group at C-4 beta position is oxidized by helB1 and subsequently removed by the short chain dehydrogenase helC. This chain is Protostadienol synthase helA, found in Aspergillus fumigatus (strain ATCC MYA-4609 / CBS 101355 / FGSC A1100 / Af293) (Neosartorya fumigata).